Consider the following 1460-residue polypeptide: Centrosomal protein of 164 kDa (1460 aa).

Residues 1–194 (MAGRPLRIGD…PSQGLKTSAY (194 aa)) are interaction with ATRIP. Positions 56–89 (APLPGEWKPCQDITGDIYYFNFANGQSMWDHPCD) constitute a WW domain. Residues 107-135 (GAIKKKKKKKEKKDKKDRDPPKSSLALGS) are disordered. Positions 109 to 119 (IKKKKKKKEKK) are enriched in basic residues. A Phosphoserine; by ATR and ATM modification is found at Ser186. Ser201 carries the post-translational modification Phosphoserine. Disordered stretches follow at residues 213–412 (GLGE…HGLD), 440–593 (AQQP…AALK), and 658–719 (EEAR…QKNR). The segment covering 217 to 227 (ETNEEDEEESD) has biased composition (acidic residues). A compositionally biased stretch (basic and acidic residues) spans 256–270 (ESLRTSQPEEKKDVS). Low complexity predominate over residues 285-296 (SSPGADSSLSSA). Basic and acidic residues-rich tracts occupy residues 310–323 (LPEKEENEKSEPKI) and 357–367 (EGSRREEAAKE). The segment covering 453–464 (QSSQDELQSKQS) has biased composition (low complexity). The span at 465 to 481 (KGLEERLSPPLPHEERA) shows a compositional bias: basic and acidic residues. The segment covering 514–525 (SAASLSLQLSLQ) has biased composition (low complexity). Positions 537 to 546 (EKGKEQHSQA) are enriched in basic and acidic residues. Ser566 carries the phosphoserine modification. Basic and acidic residues-rich tracts occupy residues 658-668 (EEARMREEESQ) and 686-719 (DQIRAEQEASLQKLREELESQQKAERASLEQKNR). Positions 1154–1206 (GIKALEDMRKNLEKETRHLDEMKSAMRKGHNLLKKKEEKLNQLESSLWEEASD) form a coiled coil. Residues 1290-1310 (PPPLLASMPAQLPPRDPKSTP) form a disordered region. Phosphoserine is present on residues Ser1386, Ser1388, and Ser1443.

In terms of assembly, interacts (via N-terminus) with ATRIP. Interacts with ATM, ATR and MDC1. Interacts with XPA (via N-terminus) upon UV irradiation. Interacts with CEP83, CCDC92, TTBK2, DVL3, NPHP3 and weakly with NPHP4. Interacts with DZIP1. Phosphorylation at Ser-186 is induced upon DNA-damage caused by treatment with IR irradiation, UV irradiation, hydroxyurea or amphidicolin. Also MDC1-mediated chromatin remodeling is critical for DNA damage-induced phosphorylation. As to expression, expressed in several cell lines.

It localises to the cytoplasm. The protein resides in the cytoskeleton. It is found in the microtubule organizing center. Its subcellular location is the centrosome. The protein localises to the centriole. It localises to the nucleus. Plays a role in microtubule organization and/or maintenance for the formation of primary cilia (PC), a microtubule-based structure that protrudes from the surface of epithelial cells. Plays a critical role in G2/M checkpoint and nuclear divisions. A key player in the DNA damage-activated ATR/ATM signaling cascade since it is required for the proper phosphorylation of H2AX, RPA, CHEK2 and CHEK1. Plays a critical role in chromosome segregation, acting as a mediator required for the maintenance of genomic stability through modulation of MDC1, RPA and CHEK1. This chain is Centrosomal protein of 164 kDa (CEP164), found in Homo sapiens (Human).